The chain runs to 707 residues: DNA ligase (707 aa).

NAD(+) contacts are provided by residues 36–40 (DADFD), 85–86 (SL), and E116. Catalysis depends on K118, which acts as the N6-AMP-lysine intermediate. NAD(+) contacts are provided by R139, E180, K298, and K322. Zn(2+) is bound by residues C416, C419, C434, and C440. A BRCT domain is found at 613 to 707 (AASSKIAGRS…STHVDPERMV (95 aa)).

The protein belongs to the NAD-dependent DNA ligase family. LigA subfamily. Mg(2+) is required as a cofactor. Requires Mn(2+) as cofactor.

The catalysed reaction is NAD(+) + (deoxyribonucleotide)n-3'-hydroxyl + 5'-phospho-(deoxyribonucleotide)m = (deoxyribonucleotide)n+m + AMP + beta-nicotinamide D-nucleotide.. Functionally, DNA ligase that catalyzes the formation of phosphodiester linkages between 5'-phosphoryl and 3'-hydroxyl groups in double-stranded DNA using NAD as a coenzyme and as the energy source for the reaction. It is essential for DNA replication and repair of damaged DNA. The polypeptide is DNA ligase (Nitrosospira multiformis (strain ATCC 25196 / NCIMB 11849 / C 71)).